The following is a 378-amino-acid chain: UPF0754 membrane protein Bcer98_0694 (378 aa).

A helical membrane pass occupies residues Leu358–Met378.

Belongs to the UPF0754 family.

The protein resides in the cell membrane. This Bacillus cytotoxicus (strain DSM 22905 / CIP 110041 / 391-98 / NVH 391-98) protein is UPF0754 membrane protein Bcer98_0694.